Reading from the N-terminus, the 283-residue chain is Protoheme IX farnesyltransferase (283 aa).

The next 7 membrane-spanning stretches (helical) occupy residues 13-33 (ISSV…PTGL), 35-55 (GGTL…VGTL), 90-110 (ILLV…LTAV), 156-176 (LGAG…PHFL), 208-228 (MIGF…TEAA), 230-250 (WIYG…TIVF), and 262-282 (VLKA…VDWF).

It belongs to the UbiA prenyltransferase family. Protoheme IX farnesyltransferase subfamily.

Its subcellular location is the cell inner membrane. The catalysed reaction is heme b + (2E,6E)-farnesyl diphosphate + H2O = Fe(II)-heme o + diphosphate. The protein operates within porphyrin-containing compound metabolism; heme O biosynthesis; heme O from protoheme: step 1/1. Its function is as follows. Converts heme B (protoheme IX) to heme O by substitution of the vinyl group on carbon 2 of heme B porphyrin ring with a hydroxyethyl farnesyl side group. The protein is Protoheme IX farnesyltransferase of Salinibacter ruber (strain DSM 13855 / M31).